The chain runs to 136 residues: Peptide methionine sulfoxide reductase MsrB (136 aa).

Residues 9–136 (DAEWKALLAE…NSASLDFKKK (128 aa)) enclose the MsrB domain. Positions 53, 56, 102, and 105 each coordinate Zn(2+). Residue Cys125 is the Nucleophile of the active site.

Belongs to the MsrB Met sulfoxide reductase family. Requires Zn(2+) as cofactor.

The enzyme catalyses L-methionyl-[protein] + [thioredoxin]-disulfide + H2O = L-methionyl-(R)-S-oxide-[protein] + [thioredoxin]-dithiol. The protein is Peptide methionine sulfoxide reductase MsrB of Variovorax paradoxus (strain S110).